The sequence spans 303 residues: Protease HtpX homolog (303 aa).

2 helical membrane-spanning segments follow: residues 4–24 and 38–58; these read VVLF…TARI and MGML…ISLL. Histidine 144 serves as a coordination point for Zn(2+). The active site involves glutamate 145. Histidine 148 contacts Zn(2+). The next 2 helical transmembrane spans lie at 152 to 172 and 199 to 219; these read GDMV…IFLS and ISSI…VMYF. Glutamate 224 is a Zn(2+) binding site.

It belongs to the peptidase M48B family. Requires Zn(2+) as cofactor.

The protein resides in the cell inner membrane. The sequence is that of Protease HtpX homolog from Chlorobium phaeobacteroides (strain BS1).